A 619-amino-acid polypeptide reads, in one-letter code: Pentatricopeptide repeat-containing protein At1g68980, mitochondrial (619 aa).

The transit peptide at 1-100 (MLRKTLTLIS…RAFVSTTYVI (100 aa)) directs the protein to the mitochondrion. PPR repeat units lie at residues 186 to 221 (DLVASNAALEACCRQMESLADAENLIESMDVLGVKP), 222 to 256 (DELSFGFLAYLYARKGLREKISELEDLMDGLGFAS), 257 to 292 (RRILYSSMISGYVKSGDLDSASDVILCSLKGVGEAS), 295 to 329 (SEETYCELVRGFIESKSVESLAKLIIEAQKLESMS), 366 to 400 (GIGVYVPILKAYCKEGRTSEATQLVTEISSSGLQL), 401 to 435 (DVETYNTMIEASMTKHDFLSALTLFRDMRETRVAD), 436 to 466 (LKRCYLTIMTGLLENQRPELMAEFVEEVMED), 472 to 506 (KSHDWNSIIHAFCKSGRLGDAKSTFRRMTFLQYEP), 507 to 541 (NNQTYLSLINGYVSCEKYFEVVVIWKEFKDKKAKL), and 542 to 576 (EHALADAFLNALVKGGFFGTALQVIEKCQEMKIFV).

Belongs to the PPR family. P subfamily.

It localises to the mitochondrion. The sequence is that of Pentatricopeptide repeat-containing protein At1g68980, mitochondrial from Arabidopsis thaliana (Mouse-ear cress).